A 267-amino-acid chain; its full sequence is Glucosamine-6-phosphate deaminase (267 aa).

Asp-72 (proton acceptor; for enolization step) is an active-site residue. Asp-141 (for ring-opening step) is an active-site residue. His-143 functions as the Proton acceptor; for ring-opening step in the catalytic mechanism. Glu-148 functions as the For ring-opening step in the catalytic mechanism.

The protein belongs to the glucosamine/galactosamine-6-phosphate isomerase family. NagB subfamily. In terms of assembly, homohexamer.

The catalysed reaction is alpha-D-glucosamine 6-phosphate + H2O = beta-D-fructose 6-phosphate + NH4(+). It participates in amino-sugar metabolism; N-acetylneuraminate degradation; D-fructose 6-phosphate from N-acetylneuraminate: step 5/5. Its activity is regulated as follows. Allosterically activated by N-acetylglucosamine 6-phosphate (GlcNAc6P). Functionally, catalyzes the reversible isomerization-deamination of glucosamine 6-phosphate (GlcN6P) to form fructose 6-phosphate (Fru6P) and ammonium ion. The protein is Glucosamine-6-phosphate deaminase of Haemophilus ducreyi (strain 35000HP / ATCC 700724).